We begin with the raw amino-acid sequence, 338 residues long: 1-aminocyclopropane-1-carboxylate deaminase (338 aa).

Residue lysine 51 is modified to N6-(pyridoxal phosphate)lysine. The Nucleophile role is filled by serine 78.

It belongs to the ACC deaminase/D-cysteine desulfhydrase family. Homotrimer. Pyridoxal 5'-phosphate is required as a cofactor.

The catalysed reaction is 1-aminocyclopropane-1-carboxylate + H2O = 2-oxobutanoate + NH4(+). Functionally, catalyzes a cyclopropane ring-opening reaction, the irreversible conversion of 1-aminocyclopropane-1-carboxylate (ACC) to ammonia and alpha-ketobutyrate. Allows growth on ACC as a nitrogen source. In Pseudomonas syringae pv. tomato (strain ATCC BAA-871 / DC3000), this protein is 1-aminocyclopropane-1-carboxylate deaminase.